The sequence spans 89 residues: MNIRTASFTFIVVMMILSQTMADRFFNEPEEDDHLVESWNPFKKIAHRHCYPKNECITTNGKKTCKDYSCCQIVLFGKKTRSACTVVAQ.

The first 22 residues, 1–22, serve as a signal peptide directing secretion; that stretch reads MNIRTASFTFIVVMMILSQTMA. The propeptide occupies 23–38; sequence DRFFNEPEEDDHLVES. The residue at position 39 (Trp-39) is a 6'-bromotryptophan.

Post-translationally, contains 3 disulfide bonds.

Functionally, has antimicrobial activity against Gram-negative bacteria and Gram-positive bacteria with minimum inhibitory concentration (MIC) between 0.78 uM and 3.13 uM. The sequence is that of Strongylocin 2 from Echinus esculentus (Sea urchin).